Consider the following 840-residue polypeptide: Protein translocase subunit SecA (840 aa).

ATP-binding positions include Q85, 103 to 107, and D492; that span reads GEGKT. Positions 787–821 are disordered; sequence QRERVAKETGASHGGDSQEIKKKPVKKEPKVGRND. Residues 802-819 are compositionally biased toward basic and acidic residues; the sequence is DSQEIKKKPVKKEPKVGR. C823, C825, C834, and C835 together coordinate Zn(2+).

This sequence belongs to the SecA family. Monomer and homodimer. Part of the essential Sec protein translocation apparatus which comprises SecA, SecYEG and auxiliary proteins SecDF. Other proteins may also be involved. Zn(2+) is required as a cofactor.

The protein localises to the cell membrane. It is found in the cytoplasm. The catalysed reaction is ATP + H2O + cellular proteinSide 1 = ADP + phosphate + cellular proteinSide 2.. Its function is as follows. Part of the Sec protein translocase complex. Interacts with the SecYEG preprotein conducting channel. Has a central role in coupling the hydrolysis of ATP to the transfer of proteins into and across the cell membrane, serving as an ATP-driven molecular motor driving the stepwise translocation of polypeptide chains across the membrane. The polypeptide is Protein translocase subunit SecA (Clostridium perfringens (strain 13 / Type A)).